Reading from the N-terminus, the 327-residue chain is Probable cell division protein WhiA (327 aa).

A DNA-binding region (H-T-H motif) is located at residues 275–308; the sequence is SLEELGRLADPPMTKDAVAGRIRRLLSMADRKAK. The segment at 304–327 is disordered; it reads DRKAKQDGIPDTESAVTPDLLEDA.

This sequence belongs to the WhiA family.

In terms of biological role, involved in cell division and chromosome segregation. This Mycolicibacterium gilvum (strain PYR-GCK) (Mycobacterium gilvum (strain PYR-GCK)) protein is Probable cell division protein WhiA.